Consider the following 271-residue polypeptide: Elongation factor Ts (271 aa).

Residues 76 to 79 (TDFV) are involved in Mg(2+) ion dislocation from EF-Tu.

This sequence belongs to the EF-Ts family.

Its subcellular location is the cytoplasm. Functionally, associates with the EF-Tu.GDP complex and induces the exchange of GDP to GTP. It remains bound to the aminoacyl-tRNA.EF-Tu.GTP complex up to the GTP hydrolysis stage on the ribosome. The sequence is that of Elongation factor Ts from Mycobacterium tuberculosis (strain ATCC 25177 / H37Ra).